Reading from the N-terminus, the 120-residue chain is uncharacterized protein (120 aa).

A helical membrane pass occupies residues Leu-93–Leu-109.

It localises to the membrane. This is an uncharacterized protein from Saccharomyces cerevisiae (strain ATCC 204508 / S288c) (Baker's yeast).